A 253-amino-acid polypeptide reads, in one-letter code: Acidic endochitinase pcht28 (253 aa).

Residues 1 to 24 (MKFNIVSPVALSCLFFLFLTGTLA) form the signal peptide. The active-site Proton donor is glutamate 92. A disulfide bond links cysteine 212 and cysteine 244.

This sequence belongs to the glycosyl hydrolase 19 family. Chitinase class II subfamily.

The protein resides in the secreted. Its subcellular location is the extracellular space. The enzyme catalyses Random endo-hydrolysis of N-acetyl-beta-D-glucosaminide (1-&gt;4)-beta-linkages in chitin and chitodextrins.. In terms of biological role, defense against chitin-containing fungal pathogens. In Solanum chilense (Tomato), this protein is Acidic endochitinase pcht28.